We begin with the raw amino-acid sequence, 457 residues long: Bifunctional protein GlmU (457 aa).

The segment at 1–232 (MNNLAAVILA…PAEVMGINDR (232 aa)) is pyrophosphorylase. UDP-N-acetyl-alpha-D-glucosamine contacts are provided by residues 9–12 (LAAG), lysine 23, glutamine 75, and 80–81 (GT). Aspartate 105 contacts Mg(2+). 4 residues coordinate UDP-N-acetyl-alpha-D-glucosamine: glycine 142, glutamate 157, asparagine 172, and asparagine 230. Asparagine 230 provides a ligand contact to Mg(2+). Residues 233–253 (AQLAEAGQLLRGRINKALMLD) form a linker region. The segment at 254 to 457 (GTTLIDPQTT…NKEGWKLKKK (204 aa)) is N-acetyltransferase. The UDP-N-acetyl-alpha-D-glucosamine site is built by arginine 336 and lysine 354. Histidine 366 serves as the catalytic Proton acceptor. UDP-N-acetyl-alpha-D-glucosamine-binding residues include tyrosine 369 and asparagine 380. Acetyl-CoA is bound by residues 389–390 (NY), serine 408, alanine 426, and arginine 443.

The protein in the N-terminal section; belongs to the N-acetylglucosamine-1-phosphate uridyltransferase family. It in the C-terminal section; belongs to the transferase hexapeptide repeat family. As to quaternary structure, homotrimer. The cofactor is Mg(2+).

The protein resides in the cytoplasm. It carries out the reaction alpha-D-glucosamine 1-phosphate + acetyl-CoA = N-acetyl-alpha-D-glucosamine 1-phosphate + CoA + H(+). The enzyme catalyses N-acetyl-alpha-D-glucosamine 1-phosphate + UTP + H(+) = UDP-N-acetyl-alpha-D-glucosamine + diphosphate. Its pathway is nucleotide-sugar biosynthesis; UDP-N-acetyl-alpha-D-glucosamine biosynthesis; N-acetyl-alpha-D-glucosamine 1-phosphate from alpha-D-glucosamine 6-phosphate (route II): step 2/2. It functions in the pathway nucleotide-sugar biosynthesis; UDP-N-acetyl-alpha-D-glucosamine biosynthesis; UDP-N-acetyl-alpha-D-glucosamine from N-acetyl-alpha-D-glucosamine 1-phosphate: step 1/1. The protein operates within bacterial outer membrane biogenesis; LPS lipid A biosynthesis. In terms of biological role, catalyzes the last two sequential reactions in the de novo biosynthetic pathway for UDP-N-acetylglucosamine (UDP-GlcNAc). The C-terminal domain catalyzes the transfer of acetyl group from acetyl coenzyme A to glucosamine-1-phosphate (GlcN-1-P) to produce N-acetylglucosamine-1-phosphate (GlcNAc-1-P), which is converted into UDP-GlcNAc by the transfer of uridine 5-monophosphate (from uridine 5-triphosphate), a reaction catalyzed by the N-terminal domain. The protein is Bifunctional protein GlmU of Geotalea uraniireducens (strain Rf4) (Geobacter uraniireducens).